The chain runs to 101 residues: Trp operon repressor homolog (101 aa).

Residues 59-82 mediate DNA binding; sequence QREIAQKYGVSIAQITRGSNALKA.

Belongs to the TrpR family. In terms of assembly, homodimer.

Its subcellular location is the cytoplasm. Its function is as follows. This protein is an aporepressor. When complexed with L-tryptophan it binds the operator region of the trp operon and prevents the initiation of transcription. The chain is Trp operon repressor homolog from Chlamydia caviae (strain ATCC VR-813 / DSM 19441 / 03DC25 / GPIC) (Chlamydophila caviae).